The sequence spans 291 residues: Phosphatidylserine decarboxylase proenzyme 2 (291 aa).

Residues Asp112 and Ser251 each act as charge relay system; for autoendoproteolytic cleavage activity in the active site. The Schiff-base intermediate with substrate; via pyruvic acid; for decarboxylase activity role is filled by Ser251. Position 251 is a pyruvic acid (Ser); by autocatalysis (Ser251).

It belongs to the phosphatidylserine decarboxylase family. PSD-B subfamily. Prokaryotic type II sub-subfamily. In terms of assembly, heterodimer of a large membrane-associated beta subunit and a small pyruvoyl-containing alpha subunit. The cofactor is pyruvate. Is synthesized initially as an inactive proenzyme. Formation of the active enzyme involves a self-maturation process in which the active site pyruvoyl group is generated from an internal serine residue via an autocatalytic post-translational modification. Two non-identical subunits are generated from the proenzyme in this reaction, and the pyruvate is formed at the N-terminus of the alpha chain, which is derived from the carboxyl end of the proenzyme. The autoendoproteolytic cleavage occurs by a canonical serine protease mechanism, in which the side chain hydroxyl group of the serine supplies its oxygen atom to form the C-terminus of the beta chain, while the remainder of the serine residue undergoes an oxidative deamination to produce ammonia and the pyruvoyl prosthetic group on the alpha chain. During this reaction, the Ser that is part of the protease active site of the proenzyme becomes the pyruvoyl prosthetic group, which constitutes an essential element of the active site of the mature decarboxylase.

The protein localises to the cell membrane. It catalyses the reaction a 1,2-diacyl-sn-glycero-3-phospho-L-serine + H(+) = a 1,2-diacyl-sn-glycero-3-phosphoethanolamine + CO2. It participates in phospholipid metabolism; phosphatidylethanolamine biosynthesis; phosphatidylethanolamine from CDP-diacylglycerol: step 2/2. Its function is as follows. Catalyzes the formation of phosphatidylethanolamine (PtdEtn) from phosphatidylserine (PtdSer). The chain is Phosphatidylserine decarboxylase proenzyme 2 from Clostridium acetobutylicum (strain ATCC 824 / DSM 792 / JCM 1419 / IAM 19013 / LMG 5710 / NBRC 13948 / NRRL B-527 / VKM B-1787 / 2291 / W).